We begin with the raw amino-acid sequence, 448 residues long: Putative RNA-ligase (448 aa).

The protein belongs to the asfivirus M448R family.

Its subcellular location is the virion. This chain is Putative RNA-ligase, found in African swine fever virus (isolate Pig/Kenya/KEN-50/1950) (ASFV).